We begin with the raw amino-acid sequence, 294 residues long: MGIRTLRPYTPSTRHMTVSDFEELSRDENGKRPRPEKSLLQFIHRKKGRNNRGVITCRHRGGGHKRLYRIIDFRRDKRGIPGTVKTVEYDPNRSAHICLVEYEDGEKRYILAPRNLQVGSTIMAGPEAPFEIGNAMPLERIPLGTVVHNVELYPGRGGQMVRAAGAGAQVVAREGKYVSLKLPSGEVRMIRGECYATIGQLGNVDHNNISLGKAGRSRWLGRRPKVRGSVMNPVDHPHGGGEGRAPIGRSTPVTPWGKPTLGYKTRKRNKPSNKFIVRGRRRGGRRDKGGRAAQ.

2 disordered regions span residues 1-37 and 228-294; these read MGIR…RPEK and GSVM…RAAQ. The span at 23 to 37 shows a compositional bias: basic and acidic residues; sequence ELSRDENGKRPRPEK. Residues 264–285 show a composition bias toward basic residues; it reads KTRKRNKPSNKFIVRGRRRGGR.

This sequence belongs to the universal ribosomal protein uL2 family. In terms of assembly, part of the 50S ribosomal subunit. Forms a bridge to the 30S subunit in the 70S ribosome.

One of the primary rRNA binding proteins. Required for association of the 30S and 50S subunits to form the 70S ribosome, for tRNA binding and peptide bond formation. It has been suggested to have peptidyltransferase activity; this is somewhat controversial. Makes several contacts with the 16S rRNA in the 70S ribosome. The protein is Large ribosomal subunit protein uL2 of Synechococcus sp. (strain JA-2-3B'a(2-13)) (Cyanobacteria bacterium Yellowstone B-Prime).